We begin with the raw amino-acid sequence, 459 residues long: MTVDDSLSPAGVATPHSSGIRVVVVGLGIAGLTTAIECHRKGHTVIALEKSPVIRVLGDSLGLGSNATNVLEKWADGKILQQLKSLADDISIFEALDSAGKLYAKDDAKGFGADNGMIINRGSLATTLHEYAKMLEIDIRFGAAVTGHWEDESAAGVIINGEQRLVADCVIGCDGIHSKTREAVLTKEPTAVPSGQAVFRASFDSTSVCNDPNARWILAEKGVRDRLSQYMAEGGLALSLATGKRGQNITWQLWHEDNHNANELWSEHNSAKLENALGMIRHWPIYSKVVPILRHTPKEALTDFKLVNRAALPTWISHAGRIIIIGDAAHPVLPIVGQGGGQGIEDAATVAICLQLAGKTHISLALQAVERLRYARTSIIQSSGPKIYAGVRNPDWKAIEKDPSLIMLPRPKWIFGYDVPRDVYEQFPLVKRAIEEGSSYTPKNIPPGGRYEFLHDFKE.

FAD-binding residues include Glu49, Gly62, and Arg121. Catalysis depends on residues Arg200 and Tyr230. FAD contacts are provided by Asp327 and Gly340.

The protein belongs to the paxM FAD-dependent monooxygenase family. Requires FAD as cofactor.

Its pathway is secondary metabolite biosynthesis. Its function is as follows. FAD-dependent monooxygenase; part of the gene cluster that mediates the biosynthesis of the benzazepine alkaloid nanangelenin A which contains an unprecedented 3,4-dihydro-1-benzazepine-2,5-dione-N-prenyl-N-acetoxy-anthranilamide scaffold. The first step of nanangelenin biosynthesis is catalyzed by the indoleamine 2,3-dioxygenase nanC which produces N-formyl-kynurenine through the catabolism of tryptophan. The two-module NRPS nanA then utilizes anthranilate (Ant) and L-kynurenine (L-Kyn) to assemble the dipeptide product nanangelenin B. The first adenylation domain of nanA (A1) loads anthranilate onto the T1 domain, while A2 loads kynurenine, generated through spontaneous nonenzymatic deformylation of the nanC-supplied N-formyl-kynurenine. The peptide bond formation between the tethered amino acids is catalyzed by the first condensation domain (C1) between anthranilate's carbonyl carbon and kynurenine's aliphatic primary amine. The second C domain (C2) catalyzes the final cyclization event between the aromatic amine of kynurenine and the tethered carbonyl carbon, yielding nanangelenin B. The terminal T3 domain enhances the catalytic efficiency of C2, suggesting the T2-tethered Ant-L-Kyn is transferred to T3 prior to cyclization by C2. Once released from nanA, nanangelenin B is then prenylated by the prenyltransferase nanD to form nanangelenin C. Nanangelenin C is then N-hydroxylated by the FAD-dependent monooxygenase nanF and further acetylated by the acetyltransferase nanB to yield nanangelenin F. Finally, the N-methyltransferase nanE methylates the amide nitrogen of 1-benzazepine to convert nanangelenin F into nanangelenin A. NanE is also able to methylate most of the intermediates of the pathway such as nanangelenin B and nanangelenin C to produce nanangelenin D and nanangelenin E, respectively. The chain is FAD-dependent monooxygenase nanF from Aspergillus nanangensis.